Consider the following 295-residue polypeptide: Sulfotransferase 1E1 (295 aa).

48-53 contacts 3'-phosphoadenylyl sulfate; sequence KSGSTW. 106–108 is a substrate binding site; sequence KTH. The active-site Proton acceptor is the H108. 3'-phosphoadenylyl sulfate-binding residues include R130 and S138. S156 carries the phosphoserine modification. Residues Y193, 227–232, and 257–259 contribute to the 3'-phosphoadenylyl sulfate site; these read TSFQEM and RKG.

Belongs to the sulfotransferase 1 family. Homodimer. Liver of young mature males and uterus.

The protein resides in the cytoplasm. It is found in the cytosol. It carries out the reaction estrone + 3'-phosphoadenylyl sulfate = estrone 3-sulfate + adenosine 3',5'-bisphosphate + H(+). It catalyses the reaction (24S)-hydroxycholesterol + 3'-phosphoadenylyl sulfate = (24S)-hydroxycholesterol 3-sulfate + adenosine 3',5'-bisphosphate + H(+). The catalysed reaction is 17beta-estradiol + 3'-phosphoadenylyl sulfate = 17beta-estradiol 3-sulfate + adenosine 3',5'-bisphosphate + H(+). The enzyme catalyses 3beta-hydroxyandrost-5-en-17-one + 3'-phosphoadenylyl sulfate = dehydroepiandrosterone 3-sulfate + adenosine 3',5'-bisphosphate + H(+). It carries out the reaction 4-ethylphenol + 3'-phosphoadenylyl sulfate = 4-ethylphenyl sulfate + adenosine 3',5'-bisphosphate + H(+). With respect to regulation, inhibited by estradiol. Functionally, sulfotransferase that utilizes 3'-phospho-5'-adenylyl sulfate (PAPS) as sulfonate donor to catalyze the sulfate conjugation of estradiol and estrone. Is a key enzyme in estrogen homeostasis, the sulfation of estrogens leads to their inactivation. Also sulfates dehydroepiandrosterone (DHEA), pregnenolone, (24S)-hydroxycholesterol and xenobiotic compounds like ethinylestradiol, equalenin, diethyl stilbesterol and 1-naphthol at significantly lower efficiency. Does not sulfonate cortisol, testosterone and dopamine. May play a role in gut microbiota-host metabolic interaction. O-sulfonates 4-ethylphenol (4-EP), a dietary tyrosine-derived metabolite produced by gut bacteria. The product 4-EPS crosses the blood-brain barrier and may negatively regulate oligodendrocyte maturation and myelination, affecting the functional connectivity of different brain regions associated with the limbic system. This Rattus norvegicus (Rat) protein is Sulfotransferase 1E1.